Consider the following 145-residue polypeptide: MKIFVQKLRPNAELPLLQTKQAAGYDIHACLDSKLVLEPGNVGLVPTGLSFAIPQEFHFEIRPRSGFSTKNRILIPNSPGTIDSDYRGELMIPLLNLGDSSFIIEHGMRIAQLLIRKTWYADWELVSEFADRTERGANGFGSTGH.

Residues 64–66 (RSG), asparagine 77, 81–83 (TID), and methionine 91 contribute to the substrate site.

It belongs to the dUTPase family. Mg(2+) is required as a cofactor.

The enzyme catalyses dUTP + H2O = dUMP + diphosphate + H(+). Its pathway is pyrimidine metabolism; dUMP biosynthesis; dUMP from dCTP (dUTP route): step 2/2. Functionally, this enzyme is involved in nucleotide metabolism: it produces dUMP, the immediate precursor of thymidine nucleotides and it decreases the intracellular concentration of dUTP so that uracil cannot be incorporated into DNA. This chain is Deoxyuridine 5'-triphosphate nucleotidohydrolase, found in Leptospira interrogans serogroup Icterohaemorrhagiae serovar copenhageni (strain Fiocruz L1-130).